Consider the following 300-residue polypeptide: tRNA dimethylallyltransferase (300 aa).

11 to 18 (GPTAVGKS) serves as a coordination point for ATP. Substrate is bound at residue 13-18 (TAVGKS). Residues 35-38 (DSIQ) are interaction with substrate tRNA.

Belongs to the IPP transferase family. As to quaternary structure, monomer. Requires Mg(2+) as cofactor.

The enzyme catalyses adenosine(37) in tRNA + dimethylallyl diphosphate = N(6)-dimethylallyladenosine(37) in tRNA + diphosphate. Functionally, catalyzes the transfer of a dimethylallyl group onto the adenine at position 37 in tRNAs that read codons beginning with uridine, leading to the formation of N6-(dimethylallyl)adenosine (i(6)A). This chain is tRNA dimethylallyltransferase, found in Borrelia duttonii (strain Ly).